The following is a 426-amino-acid chain: uncharacterized protein (426 aa).

The signal sequence occupies residues 1–23 (MKKFILFLIILLFSIYFLNVSSA).

This is an uncharacterized protein from Methanocaldococcus jannaschii (strain ATCC 43067 / DSM 2661 / JAL-1 / JCM 10045 / NBRC 100440) (Methanococcus jannaschii).